Here is a 149-residue protein sequence, read N- to C-terminus: Probable flagellum biosynthesis repressor protein FlbT (149 aa).

It belongs to the FlbT family.

Has a post-transcriptional repressor function in flagellum biogenesis. Associates with the 5'-UTR of fljK mRNA and promotes its degradation. The protein is Probable flagellum biosynthesis repressor protein FlbT of Sinorhizobium medicae (strain WSM419) (Ensifer medicae).